Consider the following 833-residue polypeptide: Prickle-like protein 1 (833 aa).

Positions 1–22 (MPLEMDQKISKHTFGCQRSSTS) are disordered. Residues 14-122 (FGCQRSSTSD…NIKMLSRAVM (109 aa)) form the PET domain. LIM zinc-binding domains are found at residues 124–188 (AMCE…ELLK), 189–249 (PRCS…HYAE), and 250–313 (YCES…EDVH). 5 disordered regions span residues 312–346 (VHAS…ADQC), 432–456 (EDNR…RNSR), 603–702 (CQEK…ERNP), 767–786 (CSSS…QPIP), and 805–833 (NALS…CIIS). Basic and acidic residues-rich tracts occupy residues 432–453 (EDNR…DLQR) and 603–614 (CQEKPPPEEKPM). Over residues 669-680 (RPHHHRRRKSRK) the composition is skewed to basic residues. Residues 817–833 (TKSKKKKGHKGKNCIIS) show a composition bias toward basic residues. Cys-830 is modified (cysteine methyl ester). Residue Cys-830 is the site of S-farnesyl cysteine attachment. Positions 831-833 (IIS) are cleaved as a propeptide — removed in mature form.

Belongs to the prickle / espinas / testin family. As to quaternary structure, interacts with dvl2/dsh and mapk8/jnk1.

The protein resides in the cell membrane. In terms of biological role, acts in a planar cell polarity (PCP) complex; polarization along the apical/basal axis of epithelial cells. Regulates the polarized assembly of fibronectrin on the surface of the mesoderm during gastrulation. Essential for gastrulation cell movements, cooperating with dvl2/dsh to activate jnk. Acts together with tes to control axial elongation. The protein is Prickle-like protein 1 of Xenopus tropicalis (Western clawed frog).